The chain runs to 217 residues: Flagellin B2 (217 aa).

A propeptide spanning residues 1-12 is cleaved from the precursor; sequence MKVFEFLKGKRG.

Belongs to the archaeal flagellin family.

Its subcellular location is the archaeal flagellum. Functionally, flagellin is the subunit protein which polymerizes to form the filaments of archaeal flagella. In Methanocaldococcus jannaschii (strain ATCC 43067 / DSM 2661 / JAL-1 / JCM 10045 / NBRC 100440) (Methanococcus jannaschii), this protein is Flagellin B2 (flaB2).